A 388-amino-acid chain; its full sequence is Alanine racemase, catabolic (388 aa).

The active-site Proton acceptor; specific for D-alanine is the lysine 46. Lysine 46 is modified (N6-(pyridoxal phosphate)lysine). Arginine 145 is a binding site for substrate. Tyrosine 267 (proton acceptor; specific for L-alanine) is an active-site residue. Methionine 315 lines the substrate pocket.

This sequence belongs to the alanine racemase family. Pyridoxal 5'-phosphate is required as a cofactor.

It catalyses the reaction L-alanine = D-alanine. In terms of biological role, isomerizes L-alanine to D-alanine which is then oxidized to pyruvate by DadA. This Agrobacterium fabrum (strain C58 / ATCC 33970) (Agrobacterium tumefaciens (strain C58)) protein is Alanine racemase, catabolic (dadB).